A 186-amino-acid polypeptide reads, in one-letter code: Threonylcarbamoyl-AMP synthase (186 aa).

The 182-residue stretch at 5–186 (LLTIKAAAKL…WEAQTQKRLR (182 aa)) folds into the YrdC-like domain.

Belongs to the SUA5 family. TsaC subfamily.

The protein resides in the cytoplasm. The enzyme catalyses L-threonine + hydrogencarbonate + ATP = L-threonylcarbamoyladenylate + diphosphate + H2O. In terms of biological role, required for the formation of a threonylcarbamoyl group on adenosine at position 37 (t(6)A37) in tRNAs that read codons beginning with adenine. Catalyzes the conversion of L-threonine, HCO(3)(-)/CO(2) and ATP to give threonylcarbamoyl-AMP (TC-AMP) as the acyladenylate intermediate, with the release of diphosphate. This Hydrogenovibrio crunogenus (strain DSM 25203 / XCL-2) (Thiomicrospira crunogena) protein is Threonylcarbamoyl-AMP synthase.